Here is a 137-residue protein sequence, read N- to C-terminus: Transcription antitermination protein NusB (137 aa).

It belongs to the NusB family.

In terms of biological role, involved in transcription antitermination. Required for transcription of ribosomal RNA (rRNA) genes. Binds specifically to the boxA antiterminator sequence of the ribosomal RNA (rrn) operons. This Finegoldia magna (strain ATCC 29328 / DSM 20472 / WAL 2508) (Peptostreptococcus magnus) protein is Transcription antitermination protein NusB.